A 504-amino-acid chain; its full sequence is MTTPSVSNAVSSPAVTAETPVRVRFCPSPTGTPHVGLIRTALFNWAYARHTQGTFVFRIEDTDAARDSEESYEQLLEALKWLGISWEEGVETGGPHEPYRQSQRLDLYKDVVAKLLEAGYAYECYSSPEEVEARHRAAGRDPKLGYDNFDRNLSAEQVAAFKAEGREPVLRVRMPDEDVTFTDMVRGEITFKAGSIPDYVIVRADGSPLYTLVNPVDDALMGITHVLRGEDLLSSTPRQVVLIRALMEIGVASYMPVFGHLPYVMGEGNKKLSKRDPQSNLFLLRDRGFIPEGLLNYLSLLGWSLSADEDIFTVEQLIEHFDVHDVLANPARFDIKKAEAINGTHIRMLDADDFRGRLVPYLRAANLVGETLTAREEEILTEAAPLIQERIALLGEAPEMISFLFKNDDAIDVADDARKGLPENLTEVLDAAIAALDAVADWSAESIQTALKQALVEDMGIKPRLAFGPVRTAVSGRRISPPLFESMVILGKASSLARLHAFRG.

Positions 27-37 (PSPTGTPHVGL) match the 'HIGH' region motif. The 'KMSKS' region motif lies at 271-275 (KLSKR). K274 is an ATP binding site.

Belongs to the class-I aminoacyl-tRNA synthetase family. Glutamate--tRNA ligase type 1 subfamily. Monomer.

Its subcellular location is the cytoplasm. It carries out the reaction tRNA(Glu) + L-glutamate + ATP = L-glutamyl-tRNA(Glu) + AMP + diphosphate. Its function is as follows. Catalyzes the attachment of glutamate to tRNA(Glu) in a two-step reaction: glutamate is first activated by ATP to form Glu-AMP and then transferred to the acceptor end of tRNA(Glu). The protein is Glutamate--tRNA ligase of Arthrobacter sp. (strain FB24).